Reading from the N-terminus, the 476-residue chain is ATP synthase subunit beta (476 aa).

An ATP-binding site is contributed by G161 to T168.

Belongs to the ATPase alpha/beta chains family. As to quaternary structure, F-type ATPases have 2 components, CF(1) - the catalytic core - and CF(0) - the membrane proton channel. CF(1) has five subunits: alpha(3), beta(3), gamma(1), delta(1), epsilon(1). CF(0) has three main subunits: a(1), b(2) and c(9-12). The alpha and beta chains form an alternating ring which encloses part of the gamma chain. CF(1) is attached to CF(0) by a central stalk formed by the gamma and epsilon chains, while a peripheral stalk is formed by the delta and b chains.

It localises to the cell membrane. The catalysed reaction is ATP + H2O + 4 H(+)(in) = ADP + phosphate + 5 H(+)(out). In terms of biological role, produces ATP from ADP in the presence of a proton gradient across the membrane. The catalytic sites are hosted primarily by the beta subunits. This is ATP synthase subunit beta from Mycolicibacterium gilvum (strain PYR-GCK) (Mycobacterium gilvum (strain PYR-GCK)).